A 138-amino-acid chain; its full sequence is Transcription antitermination protein NusB (138 aa).

Belongs to the NusB family.

Involved in transcription antitermination. Required for transcription of ribosomal RNA (rRNA) genes. Binds specifically to the boxA antiterminator sequence of the ribosomal RNA (rrn) operons. The sequence is that of Transcription antitermination protein NusB from Tolumonas auensis (strain DSM 9187 / NBRC 110442 / TA 4).